The sequence spans 542 residues: MARYVFITGGVVSSLGKGIAAAALGALLQARGYRVRLRKLDPYLNVDPGTMSPTQHGEVFVTDDGAETDLDLGHYERFTGRSATKTDNITTGRIYKNIIDKERRGDYLGATVQVIPHVTNEIKDFVTEGNKDYDFVICEIGGTVGDIEAMPFMEAIRQLGNDLPRGTAVYVHLTLMPYIPAAGELKTKPTQHSVKELQALGIHPDILLVRADREIPEAERRKLSLFCNVRPSAVIQALDVANIYDVPMAYHKEGLDDEVLAAFGIEPAPKPRLDQWEEVCNRIRTPEGEVTIAIVGKYTGLKDAYKSLIEALHHGGIANRVKVKLEWIESEVFEKEDPAPYLEKVHGILVPGGFGERGSEGKIHAARFARERKVPYFGICFGMQMAVIEAARNLADVPDASSTEFGPAKEPVVGLMTEWVKGNELQKRTAAGDLGGTMRLGAYKAALKKGTKISEIYGSTDISERHRHRYEVNIDYKDRLESCGLVFSGMSPDGVLPETIEYPDHPWFIGVQYHPELKSRPLDPHPLFASFIEAATEQSRLV.

Positions 1-265 (MARYVFITGG…DDEVLAAFGI (265 aa)) are amidoligase domain. Serine 13 serves as a coordination point for CTP. UTP is bound at residue serine 13. ATP contacts are provided by residues 14–19 (SLGKGI) and aspartate 71. Aspartate 71 and glutamate 139 together coordinate Mg(2+). CTP contacts are provided by residues 146 to 148 (DIE), 186 to 191 (KTKPTQ), and lysine 222. UTP-binding positions include 186-191 (KTKPTQ) and lysine 222. The region spanning 291–541 (TIAIVGKYTG…IEAATEQSRL (251 aa)) is the Glutamine amidotransferase type-1 domain. Position 353 (glycine 353) interacts with L-glutamine. Catalysis depends on cysteine 380, which acts as the Nucleophile; for glutamine hydrolysis. L-glutamine-binding positions include 381–384 (FGMQ), glutamate 404, and arginine 469. Active-site residues include histidine 514 and glutamate 516.

Belongs to the CTP synthase family. Homotetramer.

The enzyme catalyses UTP + L-glutamine + ATP + H2O = CTP + L-glutamate + ADP + phosphate + 2 H(+). It catalyses the reaction L-glutamine + H2O = L-glutamate + NH4(+). It carries out the reaction UTP + NH4(+) + ATP = CTP + ADP + phosphate + 2 H(+). Its pathway is pyrimidine metabolism; CTP biosynthesis via de novo pathway; CTP from UDP: step 2/2. With respect to regulation, allosterically activated by GTP, when glutamine is the substrate; GTP has no effect on the reaction when ammonia is the substrate. The allosteric effector GTP functions by stabilizing the protein conformation that binds the tetrahedral intermediate(s) formed during glutamine hydrolysis. Inhibited by the product CTP, via allosteric rather than competitive inhibition. In terms of biological role, catalyzes the ATP-dependent amination of UTP to CTP with either L-glutamine or ammonia as the source of nitrogen. Regulates intracellular CTP levels through interactions with the four ribonucleotide triphosphates. The sequence is that of CTP synthase from Rhizobium etli (strain CIAT 652).